Reading from the N-terminus, the 205-residue chain is MNEQLHNRTMAFAGILQAIAQVQYLARHGESDTDELAASLHTILVTDPETPADVYQDKAGLHKGYQLVLNQLGDSSQKDVEITRYLVGILALERKLARSNSGLSMLAERINQVNRQLHHFAITDEQVIANLASIYSDIISNLGPKIQISGNPLCLQRPIVQQKIRALLLAAMRSAVLWRQLGGKRRHLVFARKAILDTAKKSLTL.

The protein belongs to the HflD family.

Its subcellular location is the cytoplasm. It is found in the cell inner membrane. The sequence is that of High frequency lysogenization protein HflD homolog from Shewanella oneidensis (strain ATCC 700550 / JCM 31522 / CIP 106686 / LMG 19005 / NCIMB 14063 / MR-1).